Consider the following 146-residue polypeptide: Large ribosomal subunit protein uL15 (146 aa).

A compositionally biased stretch (basic and acidic residues) spans 1–13 (MKLHELKAAEGSR). The interval 1–56 (MKLHELKAAEGSRRVRNRVGRGAATGNGKTSGRGQKGQKARSGGKLRPGFEGGQLP) is disordered. Residues 23 to 35 (AATGNGKTSGRGQ) show a composition bias toward gly residues.

This sequence belongs to the universal ribosomal protein uL15 family. As to quaternary structure, part of the 50S ribosomal subunit.

Binds to the 23S rRNA. The sequence is that of Large ribosomal subunit protein uL15 from Staphylococcus epidermidis (strain ATCC 35984 / DSM 28319 / BCRC 17069 / CCUG 31568 / BM 3577 / RP62A).